The primary structure comprises 247 residues: ATP synthase subunit a, chloroplastic (247 aa).

Helical transmembrane passes span 38 to 58, 95 to 115, 134 to 154, 199 to 219, and 220 to 240; these read QVLITSWVVITILLGSVIIAV, VPFIGTMFLFIFVSNWSGALL, INTTVALALLTSAAYFYAGLS, LVVVVLVSLVPLVVPIPVMFL, and GLFTSGIQALIFATLAAAYIG.

This sequence belongs to the ATPase A chain family. In terms of assembly, F-type ATPases have 2 components, CF(1) - the catalytic core - and CF(0) - the membrane proton channel. CF(1) has five subunits: alpha(3), beta(3), gamma(1), delta(1), epsilon(1). CF(0) has four main subunits: a, b, b' and c.

It is found in the plastid. The protein resides in the chloroplast thylakoid membrane. Functionally, key component of the proton channel; it plays a direct role in the translocation of protons across the membrane. The chain is ATP synthase subunit a, chloroplastic from Zea mays (Maize).